Here is a 394-residue protein sequence, read N- to C-terminus: Tubulin-like protein CetZ5 (394 aa).

Residues 10–14 (QAGGN), 110–112 (GTG), glutamate 142, asparagine 169, and asparagine 187 contribute to the GTP site.

Belongs to the CetZ family.

The protein localises to the cytoplasm. Its function is as follows. Involved in cell shape control. The chain is Tubulin-like protein CetZ5 from Haloferax volcanii (strain ATCC 29605 / DSM 3757 / JCM 8879 / NBRC 14742 / NCIMB 2012 / VKM B-1768 / DS2) (Halobacterium volcanii).